The following is a 215-amino-acid chain: NADH-quinone oxidoreductase subunit C (215 aa).

The protein belongs to the complex I 30 kDa subunit family. As to quaternary structure, NDH-1 is composed of 14 different subunits. Subunits NuoB, C, D, E, F, and G constitute the peripheral sector of the complex.

Its subcellular location is the cell inner membrane. It carries out the reaction a quinone + NADH + 5 H(+)(in) = a quinol + NAD(+) + 4 H(+)(out). In terms of biological role, NDH-1 shuttles electrons from NADH, via FMN and iron-sulfur (Fe-S) centers, to quinones in the respiratory chain. The immediate electron acceptor for the enzyme in this species is believed to be ubiquinone. Couples the redox reaction to proton translocation (for every two electrons transferred, four hydrogen ions are translocated across the cytoplasmic membrane), and thus conserves the redox energy in a proton gradient. The polypeptide is NADH-quinone oxidoreductase subunit C (Dinoroseobacter shibae (strain DSM 16493 / NCIMB 14021 / DFL 12)).